A 91-amino-acid chain; its full sequence is MGIFDWKHWIVILIVVVLVFGTKKLKGLGSDVGESIKGFRKAMNDDDKPAEQPAPQPQQAQAAPQGSPLNQPHTIDAQAHKVDEPIRKDQV.

A helical membrane pass occupies residues 1-21; sequence MGIFDWKHWIVILIVVVLVFG. A disordered region spans residues 42 to 91; the sequence is AMNDDDKPAEQPAPQPQQAQAAPQGSPLNQPHTIDAQAHKVDEPIRKDQV. Positions 51 to 65 are enriched in low complexity; that stretch reads EQPAPQPQQAQAAPQ. Positions 78-91 are enriched in basic and acidic residues; that stretch reads QAHKVDEPIRKDQV.

Belongs to the TatA/E family. As to quaternary structure, the Tat system comprises two distinct complexes: a TatABC complex, containing multiple copies of TatA, TatB and TatC subunits, and a separate TatA complex, containing only TatA subunits. Substrates initially bind to the TatABC complex, which probably triggers association of the separate TatA complex to form the active translocon.

It is found in the cell inner membrane. Its function is as follows. Part of the twin-arginine translocation (Tat) system that transports large folded proteins containing a characteristic twin-arginine motif in their signal peptide across membranes. TatA could form the protein-conducting channel of the Tat system. In Pseudomonas savastanoi pv. phaseolicola (strain 1448A / Race 6) (Pseudomonas syringae pv. phaseolicola (strain 1448A / Race 6)), this protein is Sec-independent protein translocase protein TatA.